Here is a 122-residue protein sequence, read N- to C-terminus: Serum amyloid A-2 protein (122 aa).

The signal sequence occupies residues 1-18 (MKLLSGLLLCSLVLGVSG). Q19 is modified (pyrrolidone carboxylic acid). Residues 90–122 (GAEDSMADQAANEWGRSGKDPNHFRPKGLPDKY) are disordered. The segment covering 105–122 (RSGKDPNHFRPKGLPDKY) has biased composition (basic and acidic residues).

The protein belongs to the SAA family. In terms of assembly, apolipoprotein of the HDL complex. In terms of tissue distribution, expressed by the liver; secreted in plasma.

It localises to the secreted. Its function is as follows. Major acute phase reactant. In Oryctolagus cuniculus (Rabbit), this protein is Serum amyloid A-2 protein (SAA2).